A 266-amino-acid polypeptide reads, in one-letter code: Signal peptidase I (266 aa).

Over 1 to 20 (MQTDNTKSNTNKTAKQEWGS) the chain is Cytoplasmic. A helical transmembrane segment spans residues 21-41 (FAFVICIALLIRILIMEPFTV). At 42–266 (PTGSMKATIL…IFRNLYSTDE (225 aa)) the chain is on the periplasmic side. Residues Ser45 and Lys108 contribute to the active site.

This sequence belongs to the peptidase S26 family.

The protein localises to the cell inner membrane. It catalyses the reaction Cleavage of hydrophobic, N-terminal signal or leader sequences from secreted and periplasmic proteins.. The protein is Signal peptidase I (lepB) of Rickettsia felis (strain ATCC VR-1525 / URRWXCal2) (Rickettsia azadi).